The primary structure comprises 521 residues: Protein nucleotidyltransferase YdiU (521 aa).

ATP-binding residues include G109, G111, R112, K131, D143, G144, R194, and R201. Catalysis depends on D270, which acts as the Proton acceptor. The Mg(2+) site is built by N271 and D280. Residue D280 coordinates ATP.

This sequence belongs to the SELO family. Mg(2+) is required as a cofactor. The cofactor is Mn(2+).

The enzyme catalyses L-seryl-[protein] + ATP = 3-O-(5'-adenylyl)-L-seryl-[protein] + diphosphate. It catalyses the reaction L-threonyl-[protein] + ATP = 3-O-(5'-adenylyl)-L-threonyl-[protein] + diphosphate. It carries out the reaction L-tyrosyl-[protein] + ATP = O-(5'-adenylyl)-L-tyrosyl-[protein] + diphosphate. The catalysed reaction is L-histidyl-[protein] + UTP = N(tele)-(5'-uridylyl)-L-histidyl-[protein] + diphosphate. The enzyme catalyses L-seryl-[protein] + UTP = O-(5'-uridylyl)-L-seryl-[protein] + diphosphate. It catalyses the reaction L-tyrosyl-[protein] + UTP = O-(5'-uridylyl)-L-tyrosyl-[protein] + diphosphate. Nucleotidyltransferase involved in the post-translational modification of proteins. It can catalyze the addition of adenosine monophosphate (AMP) or uridine monophosphate (UMP) to a protein, resulting in modifications known as AMPylation and UMPylation. In Burkholderia pseudomallei (strain 1106a), this protein is Protein nucleotidyltransferase YdiU.